The following is a 449-amino-acid chain: Tubulin alpha-2 chain (449 aa).

Gln11 lines the GTP pocket. Lys40 bears the N6-acetyllysine mark. Residues Glu71, Ser140, Gly144, Thr145, Thr179, Asn206, and Asn228 each contribute to the GTP site. Glu71 lines the Mg(2+) pocket. Glu254 is a catalytic residue.

Belongs to the tubulin family. In terms of assembly, dimer of alpha and beta chains. A typical microtubule is a hollow water-filled tube with an outer diameter of 25 nm and an inner diameter of 15 nM. Alpha-beta heterodimers associate head-to-tail to form protofilaments running lengthwise along the microtubule wall with the beta-tubulin subunit facing the microtubule plus end conferring a structural polarity. Microtubules usually have 13 protofilaments but different protofilament numbers can be found in some organisms and specialized cells. Mg(2+) is required as a cofactor. Post-translationally, undergoes a tyrosination/detyrosination cycle, the cyclic removal and re-addition of a C-terminal tyrosine residue by the enzymes tubulin tyrosine carboxypeptidase (TTCP) and tubulin tyrosine ligase (TTL), respectively. In terms of processing, acetylation of alpha chains at Lys-40 stabilizes microtubules and affects affinity and processivity of microtubule motors. This modification has a role in multiple cellular functions, ranging from cell motility, cell cycle progression or cell differentiation to intracellular trafficking and signaling. During the early stages of oogenesis lky/Alpha-tubulin N-acetyltransferase 2 is the main acetyltransferase responsible for Lys-40 acetylation in germline cells while Atat/alpha-tubulin N-acetyltransferase 1 is the main acetyltransferase responsible for Lys-40 acetylation in somatic cells.

The protein localises to the cytoplasm. It is found in the cytoskeleton. It carries out the reaction GTP + H2O = GDP + phosphate + H(+). In terms of biological role, tubulin is the major constituent of microtubules, a cylinder consisting of laterally associated linear protofilaments composed of alpha- and beta-tubulin heterodimers. Microtubules grow by the addition of GTP-tubulin dimers to the microtubule end, where a stabilizing cap forms. Below the cap, tubulin dimers are in GDP-bound state, owing to GTPase activity of alpha-tubulin. This chain is Tubulin alpha-2 chain (alphaTub85E), found in Drosophila melanogaster (Fruit fly).